The sequence spans 210 residues: MTSSALVPSSAELCPDRTAEVSRTTAETRITVRVNLDGTGAASLHTGIGFFDHMLDQIARHGLIDLQIDCDGDLHIDGHHTVEDVGITLGQAFARAVGDKKGIRRYGHAYVPLDEALSRVVVDFSGRPGLHLHIPFTAGSIGGFDTQLTYEFFQGFVNHAGVTLHIDNLKGINAHHQCETVFKAFARALRAALERDPRAAGVIPSTKGSL.

The protein belongs to the imidazoleglycerol-phosphate dehydratase family.

The protein resides in the cytoplasm. It carries out the reaction D-erythro-1-(imidazol-4-yl)glycerol 3-phosphate = 3-(imidazol-4-yl)-2-oxopropyl phosphate + H2O. Its pathway is amino-acid biosynthesis; L-histidine biosynthesis; L-histidine from 5-phospho-alpha-D-ribose 1-diphosphate: step 6/9. This Acidovorax ebreus (strain TPSY) (Diaphorobacter sp. (strain TPSY)) protein is Imidazoleglycerol-phosphate dehydratase.